Here is a 1339-residue protein sequence, read N- to C-terminus: DNA-directed RNA polymerase subunit beta'' (1339 aa).

4 residues coordinate Zn(2+): Cys-226, Cys-299, Cys-306, and Cys-309.

The protein belongs to the RNA polymerase beta' chain family. RpoC2 subfamily. As to quaternary structure, in plastids the minimal PEP RNA polymerase catalytic core is composed of four subunits: alpha, beta, beta', and beta''. When a (nuclear-encoded) sigma factor is associated with the core the holoenzyme is formed, which can initiate transcription. Zn(2+) is required as a cofactor.

The protein resides in the plastid. It is found in the chloroplast. The catalysed reaction is RNA(n) + a ribonucleoside 5'-triphosphate = RNA(n+1) + diphosphate. DNA-dependent RNA polymerase catalyzes the transcription of DNA into RNA using the four ribonucleoside triphosphates as substrates. The protein is DNA-directed RNA polymerase subunit beta'' of Cycas taitungensis (Prince sago).